Here is a 291-residue protein sequence, read N- to C-terminus: ATP synthase subunit a (291 aa).

5 helical membrane-spanning segments follow: residues 48–68 (IHLDSMGWSIGLGIIFCLVFW), 108–128 (IAPLALTIFVWIFLMNLMDLI), 161–181 (DPNITLGMSLSVFVLILFYSI), 241–261 (LIFILIALLPFWIQWALSVPW), and 262–282 (AIFHILVITLQAFIFMMLTIV).

The protein belongs to the ATPase A chain family. F-type ATPases have 2 components, CF(1) - the catalytic core - and CF(0) - the membrane proton channel. CF(1) has five subunits: alpha(3), beta(3), gamma(1), delta(1), epsilon(1). CF(0) has three main subunits: a(1), b(2) and c(9-12). The alpha and beta chains form an alternating ring which encloses part of the gamma chain. CF(1) is attached to CF(0) by a central stalk formed by the gamma and epsilon chains, while a peripheral stalk is formed by the delta and b chains.

Its subcellular location is the cell inner membrane. Its function is as follows. Key component of the proton channel; it plays a direct role in the translocation of protons across the membrane. This Acinetobacter baylyi (strain ATCC 33305 / BD413 / ADP1) protein is ATP synthase subunit a.